Consider the following 214-residue polypeptide: Adenylate kinase (214 aa).

ATP is bound at residue 10–15 (GAGKGT). The interval 30 to 59 (STGDMLRAAVKAGTELGKQAKEIMDAGKLV) is NMP. Residues T31, R36, 57–59 (KLV), 85–88 (GFPR), and Q92 contribute to the AMP site. The LID stretch occupies residues 122–159 (GRRVHAASGRVYHVKFNPPKVEDKDDVTGEDLSVRKDD). Residues R123 and 132–133 (VY) contribute to the ATP site. Positions 156 and 167 each coordinate AMP. R200 lines the ATP pocket.

It belongs to the adenylate kinase family. As to quaternary structure, monomer.

The protein localises to the cytoplasm. It carries out the reaction AMP + ATP = 2 ADP. Its pathway is purine metabolism; AMP biosynthesis via salvage pathway; AMP from ADP: step 1/1. In terms of biological role, catalyzes the reversible transfer of the terminal phosphate group between ATP and AMP. Plays an important role in cellular energy homeostasis and in adenine nucleotide metabolism. This Pectobacterium atrosepticum (strain SCRI 1043 / ATCC BAA-672) (Erwinia carotovora subsp. atroseptica) protein is Adenylate kinase.